The chain runs to 314 residues: Ribonuclease Z (314 aa).

Histidine 62, histidine 64, aspartate 66, histidine 67, histidine 144, aspartate 215, and histidine 273 together coordinate Zn(2+). Catalysis depends on aspartate 66, which acts as the Proton acceptor.

It belongs to the RNase Z family. As to quaternary structure, homodimer. Zn(2+) is required as a cofactor.

The catalysed reaction is Endonucleolytic cleavage of RNA, removing extra 3' nucleotides from tRNA precursor, generating 3' termini of tRNAs. A 3'-hydroxy group is left at the tRNA terminus and a 5'-phosphoryl group is left at the trailer molecule.. Its function is as follows. Zinc phosphodiesterase, which displays some tRNA 3'-processing endonuclease activity. Probably involved in tRNA maturation, by removing a 3'-trailer from precursor tRNA. In Prochlorococcus marinus (strain NATL1A), this protein is Ribonuclease Z.